Reading from the N-terminus, the 427-residue chain is Cholecystokinin receptor type A (427 aa).

Residues 1 to 41 lie on the Extracellular side of the membrane; that stretch reads MDAVASLLGNASGIPPPCELGLDNETLFCLDQPPPSKEWQP. Asparagine 10 and asparagine 24 each carry an N-linked (GlcNAc...) asparagine glycan. A disulfide bond links cysteine 18 and cysteine 29. A helical membrane pass occupies residues 42–67; that stretch reads AVQILLYSLIFLLSVLGNTLVITVLI. Over 68–77 the chain is Cytoplasmic; it reads RNKRMRTVTN. A helical transmembrane segment spans residues 78–104; that stretch reads IFLLSLAISDLMLCLFCMPFNLIPNLL. The Extracellular segment spans residues 105–115; sequence KDFIFGSALCK. Cysteine 114 and cysteine 196 are oxidised to a cystine. Residues 116 to 137 form a helical membrane-spanning segment; the sequence is TTTYLMGTSVSVSTLNLVAISL. Over 138 to 157 the chain is Cytoplasmic; sequence ERYGAICKPLQSRVWQTKSH. Residues 158 to 178 traverse the membrane as a helical segment; the sequence is ALKVIAATWCLSFAIMTPYPI. The Extracellular segment spans residues 179–210; sequence YSNLVPFTKTNNQTANMCRFLLPSDVMQQAWH. A glycan (N-linked (GlcNAc...) asparagine) is linked at asparagine 190. A helical membrane pass occupies residues 211-234; sequence TFLLLILFLIPGIVMMVAYGMISL. Over 235 to 312 the chain is Cytoplasmic; sequence ELYQGIKFDA…TLMAKKRVIR (78 aa). Residues 313 to 333 form a helical membrane-spanning segment; the sequence is MLMVIVVLFFLCWMPIFSANA. Over 334-348 the chain is Extracellular; it reads WRAYDTVSAERRLSG. Residues 349–372 traverse the membrane as a helical segment; it reads TPISFILLLSYTSSCVNPIIYCFM. At 373–427 the chain is on the cytoplasmic side; that stretch reads NRRFRLGFMATFPCCPNPGPPGPRAEAGEEEEGRTTRASLSRYSYSHMSASAPPS. Cysteine 386 carries S-palmitoyl cysteine lipidation. The tract at residues 391 to 427 is disordered; that stretch reads GPPGPRAEAGEEEEGRTTRASLSRYSYSHMSASAPPS. A compositionally biased stretch (polar residues) spans 411 to 421; the sequence is SLSRYSYSHMS.

The protein belongs to the G-protein coupled receptor 1 family.

The protein resides in the cell membrane. Functionally, receptor for cholecystokinin. Mediates pancreatic growth and enzyme secretion, smooth muscle contraction of the gall bladder and stomach. Has a 1000-fold higher affinity for CCK rather than for gastrin. It modulates feeding and dopamine-induced behavior in the central and peripheral nervous system. This receptor mediates its action by association with G proteins that activate a phosphatidylinositol-calcium second messenger system. The polypeptide is Cholecystokinin receptor type A (CCKAR) (Oryctolagus cuniculus (Rabbit)).